The chain runs to 647 residues: Threonine--tRNA ligase (647 aa).

The region spanning 1–61 (MIKITFPDGA…EEDGSIEIVT (61 aa)) is the TGS domain. The interval 240–538 (DHRKLGKELD…LIETYKGAFP (299 aa)) is catalytic. Residues Cys334, His385, and His515 each coordinate Zn(2+).

It belongs to the class-II aminoacyl-tRNA synthetase family. As to quaternary structure, homodimer. The cofactor is Zn(2+).

It localises to the cytoplasm. The enzyme catalyses tRNA(Thr) + L-threonine + ATP = L-threonyl-tRNA(Thr) + AMP + diphosphate + H(+). Functionally, catalyzes the attachment of threonine to tRNA(Thr) in a two-step reaction: L-threonine is first activated by ATP to form Thr-AMP and then transferred to the acceptor end of tRNA(Thr). Also edits incorrectly charged L-seryl-tRNA(Thr). The sequence is that of Threonine--tRNA ligase from Streptococcus pyogenes serotype M28 (strain MGAS6180).